The following is a 146-amino-acid chain: Large ribosomal subunit protein bL19 (146 aa).

It belongs to the bacterial ribosomal protein bL19 family.

Its function is as follows. This protein is located at the 30S-50S ribosomal subunit interface and may play a role in the structure and function of the aminoacyl-tRNA binding site. This Bartonella henselae (strain ATCC 49882 / DSM 28221 / CCUG 30454 / Houston 1) (Rochalimaea henselae) protein is Large ribosomal subunit protein bL19.